Here is a 309-residue protein sequence, read N- to C-terminus: MMSFLHIVFSILVVVAFILGNFANGFIALINFIAWVKRQKISSADQIIAALAVSRVGLLWVILLHWYSTVLNPTSSNLKVIIFISNAWAVTNHFSIWLATSLSIFYLLKIVNFSRLIFHHLKRKAKSVVLVIVLGSLFFLVCHLVMKNTYINVWTEECEGNVTWKIKLRNAMHLSNLTVAMLANLIPFTLTLISFLLLIYSLCKHLKKMQLHGKGSQDPSTKIHIKALQTVTSFLILLAIYFLCLITSFWNSKMRPKEIVLMLCQAFGIIYPSFHSFILIWGNKTLKQTFLSVLWQVTCWAKGQNQSTP.

At 1–6 the chain is on the extracellular side; that stretch reads MMSFLH. A helical transmembrane segment spans residues 7-27; it reads IVFSILVVVAFILGNFANGFI. The Cytoplasmic segment spans residues 28–46; sequence ALINFIAWVKRQKISSADQ. Residues 47–67 form a helical membrane-spanning segment; sequence IIAALAVSRVGLLWVILLHWY. Residues 68 to 79 lie on the Extracellular side of the membrane; sequence STVLNPTSSNLK. A helical transmembrane segment spans residues 80–100; the sequence is VIIFISNAWAVTNHFSIWLAT. The Cytoplasmic portion of the chain corresponds to 101 to 125; that stretch reads SLSIFYLLKIVNFSRLIFHHLKRKA. The helical transmembrane segment at 126–146 threads the bilayer; that stretch reads KSVVLVIVLGSLFFLVCHLVM. The Extracellular portion of the chain corresponds to 147 to 178; the sequence is KNTYINVWTEECEGNVTWKIKLRNAMHLSNLT. Residues 179–199 traverse the membrane as a helical segment; that stretch reads VAMLANLIPFTLTLISFLLLI. Residues 200–229 lie on the Cytoplasmic side of the membrane; it reads YSLCKHLKKMQLHGKGSQDPSTKIHIKALQ. Residues 230 to 250 form a helical membrane-spanning segment; that stretch reads TVTSFLILLAIYFLCLITSFW. The Extracellular portion of the chain corresponds to 251 to 259; sequence NSKMRPKEI. The chain crosses the membrane as a helical span at residues 260-280; the sequence is VLMLCQAFGIIYPSFHSFILI. The Cytoplasmic portion of the chain corresponds to 281–309; sequence WGNKTLKQTFLSVLWQVTCWAKGQNQSTP.

It belongs to the G-protein coupled receptor T2R family.

The protein localises to the membrane. Its function is as follows. Receptor that may play a role in the perception of bitterness and is gustducin-linked. May play a role in sensing the chemical composition of the gastrointestinal content. The activity of this receptor may stimulate alpha gustducin, mediate PLC-beta-2 activation and lead to the gating of TRPM5. The sequence is that of Taste receptor type 2 member 20 (TAS2R20) from Pan paniscus (Pygmy chimpanzee).